Here is a 353-residue protein sequence, read N- to C-terminus: Fe(3+) ions import ATP-binding protein FbpC (353 aa).

Positions 9-239 constitute an ABC transporter domain; it reads VTFENVTKKF…PASAFIADFM (231 aa). 41–48 is an ATP binding site; that stretch reads GLSGCGKT.

The protein belongs to the ABC transporter superfamily. Fe(3+) ion importer (TC 3.A.1.10) family. In terms of assembly, the complex is composed of two ATP-binding proteins (FbpC), two transmembrane proteins (FbpB) and a solute-binding protein (FbpA).

The protein localises to the cell inner membrane. The enzyme catalyses Fe(3+)(out) + ATP + H2O = Fe(3+)(in) + ADP + phosphate + H(+). Its function is as follows. Part of the ABC transporter complex FbpABC involved in Fe(3+) ions import. Responsible for energy coupling to the transport system. The sequence is that of Fe(3+) ions import ATP-binding protein FbpC from Brucella melitensis biotype 1 (strain ATCC 23456 / CCUG 17765 / NCTC 10094 / 16M).